A 407-amino-acid chain; its full sequence is Eukaryotic initiation factor 4A-II (407 aa).

Positions 1–23 are disordered; the sequence is MSGGSADYSRDHGGPEGMEPDGV. The short motif at 33-61 is the Q motif element; it reads DNFDDMNLKESLLRGIYAYGFEKPSAIQQ. Residues 64–235 enclose the Helicase ATP-binding domain; that stretch reads IIPCIKGYDV…KKFMREPIRI (172 aa). 77 to 84 contacts ATP; that stretch reads AQSGTGKT. The short motif at 183–186 is the DEAD box element; it reads DEAD. One can recognise a Helicase C-terminal domain in the interval 246-407; that stretch reads GIKQFYINVE…EMPMNVADLI (162 aa).

This sequence belongs to the DEAD box helicase family. eIF4A subfamily. In terms of assembly, eIF4F is a multi-subunit complex, the composition of which varies with external and internal environmental conditions. It is composed of at least EIF4A, EIF4E and EIF4G1/EIFFG3. Interacts with EIF4E.

The catalysed reaction is ATP + H2O = ADP + phosphate + H(+). Its function is as follows. ATP-dependent RNA helicase which is a subunit of the eIF4F complex involved in cap recognition and is required for mRNA binding to ribosome. In the current model of translation initiation, eIF4A unwinds RNA secondary structures in the 5'-UTR of mRNAs which is necessary to allow efficient binding of the small ribosomal subunit, and subsequent scanning for the initiator codon. This chain is Eukaryotic initiation factor 4A-II (EIF4A2), found in Gallus gallus (Chicken).